The following is a 235-amino-acid chain: MFIDLNVVWPTLGVKDLNLVKTVKTLERLGYTAIALNYQYDGKLQNVIKNPIVKELYPEQKIKIYSRITLTIESMPQNKVLSNVTKEFDILAIRPIGDRLLQQTCSDLEFDILSIDFTQRLPFYLKHTFMGLAVSRDIGIEISYSSGLRDVSNRRNLITNATSLVRATRGRGIIVTSETRTPLECRAGFDVINLATFWDLKQDQARKSVGESCRSVLLHAETRRDTYRSILNGCH.

The protein belongs to the eukaryotic/archaeal RNase P protein component 3 family.

It localises to the nucleus. The catalysed reaction is Endonucleolytic cleavage of RNA, removing 5'-extranucleotides from tRNA precursor.. Part of ribonuclease P, a protein complex that generates mature tRNA molecules by cleaving their 5'-ends. The sequence is that of Probable ribonuclease P protein subunit 3 from Schizosaccharomyces pombe (strain 972 / ATCC 24843) (Fission yeast).